The following is a 495-amino-acid chain: Glycogen synthase (495 aa).

Lys-15 provides a ligand contact to ADP-alpha-D-glucose.

Belongs to the glycosyltransferase 1 family. Bacterial/plant glycogen synthase subfamily.

It catalyses the reaction [(1-&gt;4)-alpha-D-glucosyl](n) + ADP-alpha-D-glucose = [(1-&gt;4)-alpha-D-glucosyl](n+1) + ADP + H(+). The protein operates within glycan biosynthesis; glycogen biosynthesis. In terms of biological role, synthesizes alpha-1,4-glucan chains using ADP-glucose. This Variovorax paradoxus (strain S110) protein is Glycogen synthase.